A 303-amino-acid chain; its full sequence is BAG family molecular chaperone regulator 3 (303 aa).

Residues 1–11 show a composition bias toward polar residues; that stretch reads MMKMNTGTSPS. Residues 1-27 form a disordered region; sequence MMKMNTGTSPSVIGGGTSGNEWESRPG. The region spanning 45–119 is the Ubiquitin-like domain; it reads FRVRVKYGSV…LVVKEDPISQ (75 aa). The region spanning 138 to 216 is the BAG domain; it reads SISDISFEVD…KYVEALDLLK (79 aa). Positions 249-268 are disordered; it reads VEEEEEEPRNSNASSSSGTP. The span at 258–267 shows a compositional bias: polar residues; the sequence is NSNASSSSGT. A Phosphoserine modification is found at Ser-263.

Binds to the ATPase domain of HSP70/HSC70 chaperones. Interacts with HSP70-1.

In terms of biological role, co-chaperone that regulates diverse cellular pathways, such as programmed cell death and stress responses. The sequence is that of BAG family molecular chaperone regulator 3 (BAG3) from Arabidopsis thaliana (Mouse-ear cress).